We begin with the raw amino-acid sequence, 244 residues long: Lactate utilization protein A (244 aa).

It belongs to the LutA/YkgE family.

Functionally, is involved in L-lactate degradation and allows cells to grow with lactate as the sole carbon source. The protein is Lactate utilization protein A of Halalkalibacterium halodurans (strain ATCC BAA-125 / DSM 18197 / FERM 7344 / JCM 9153 / C-125) (Bacillus halodurans).